The sequence spans 429 residues: Adenylosuccinate synthetase (429 aa).

GTP contacts are provided by residues 12-18 (GDEGKGK) and 40-42 (GHT). The active-site Proton acceptor is Asp-13. Mg(2+) contacts are provided by Asp-13 and Gly-40. IMP-binding positions include 13-16 (DEGK), 38-41 (NAGH), Thr-128, Arg-142, Gln-223, Thr-238, and Arg-302. Residue His-41 is the Proton donor of the active site. Position 298 to 304 (298 to 304 (TVTGRPR)) interacts with substrate. GTP is bound by residues Arg-304, 330–332 (LLD), and 412–414 (SVG).

This sequence belongs to the adenylosuccinate synthetase family. As to quaternary structure, homodimer. It depends on Mg(2+) as a cofactor.

The protein resides in the cytoplasm. The enzyme catalyses IMP + L-aspartate + GTP = N(6)-(1,2-dicarboxyethyl)-AMP + GDP + phosphate + 2 H(+). Its pathway is purine metabolism; AMP biosynthesis via de novo pathway; AMP from IMP: step 1/2. In terms of biological role, plays an important role in the de novo pathway of purine nucleotide biosynthesis. Catalyzes the first committed step in the biosynthesis of AMP from IMP. This Limosilactobacillus fermentum (strain NBRC 3956 / LMG 18251) (Lactobacillus fermentum) protein is Adenylosuccinate synthetase.